We begin with the raw amino-acid sequence, 76 residues long: Small ribosomal subunit protein bS18 (76 aa).

It belongs to the bacterial ribosomal protein bS18 family. Part of the 30S ribosomal subunit. Forms a tight heterodimer with protein bS6.

Functionally, binds as a heterodimer with protein bS6 to the central domain of the 16S rRNA, where it helps stabilize the platform of the 30S subunit. The sequence is that of Small ribosomal subunit protein bS18 from Carboxydothermus hydrogenoformans (strain ATCC BAA-161 / DSM 6008 / Z-2901).